A 304-amino-acid polypeptide reads, in one-letter code: MTTRTDAVKAYLLDLQDRICAALETEDGGTRFVEDAWTRPAGGGGRTRVIENGTVIEKGGVNFSHVFGSGLPPSASAHRPELAGRGFEALGVSLVIHPHNPHVPTSHANVRFFIAEKEGEEPVWWFGGGFDLTPYYGNEEDCIHWHRVAEKACAPFGPDVYPRYKAWCDTYFHIKHRHEPRGIGGLFFDDLNEWDFDTSFAFMRAIGDAYIDAYLPIVQRRKNDAFTARQREFQEFRRGRYVEFNLVYDRGTLFGLQSGGRTESILMSLPPQVRWAYDWKAEPGSEEARLTEYFLQDRDWLAQA.

S93 serves as a coordination point for substrate. A divalent metal cation contacts are provided by H97 and H107. H107 functions as the Proton donor in the catalytic mechanism. 109–111 contributes to the substrate binding site; that stretch reads NVR. A divalent metal cation is bound by residues H146 and H176. The segment at 241–276 is important for dimerization; that stretch reads YVEFNLVYDRGTLFGLQSGGRTESILMSLPPQVRWA. Residue 259–261 coordinates substrate; sequence GGR.

This sequence belongs to the aerobic coproporphyrinogen-III oxidase family. As to quaternary structure, homodimer. The cofactor is a divalent metal cation.

Its subcellular location is the cytoplasm. It carries out the reaction coproporphyrinogen III + O2 + 2 H(+) = protoporphyrinogen IX + 2 CO2 + 2 H2O. It functions in the pathway porphyrin-containing compound metabolism; protoporphyrin-IX biosynthesis; protoporphyrinogen-IX from coproporphyrinogen-III (O2 route): step 1/1. Its function is as follows. Involved in the heme biosynthesis. Catalyzes the aerobic oxidative decarboxylation of propionate groups of rings A and B of coproporphyrinogen-III to yield the vinyl groups in protoporphyrinogen-IX. This Pseudomonas fluorescens (strain Pf0-1) protein is Oxygen-dependent coproporphyrinogen-III oxidase.